The chain runs to 564 residues: Esterase FE4 (564 aa).

An N-terminal signal peptide occupies residues 1-23 (MKNTCGILLNLFLFIGCFLTCSA). Residue N81 is glycosylated (N-linked (GlcNAc...) asparagine). Cysteines 89 and 106 form a disulfide. S214 serves as the catalytic Acyl-ester intermediate. C266 and C277 are joined by a disulfide. An N-linked (GlcNAc...) asparagine glycan is attached at N269. E339 acts as the Charge relay system in catalysis. Residues N371, N404, and N443 are each glycosylated (N-linked (GlcNAc...) asparagine). H463 (charge relay system) is an active-site residue.

Belongs to the type-B carboxylesterase/lipase family.

The enzyme catalyses a carboxylic ester + H2O = an alcohol + a carboxylate + H(+). Its function is as follows. Overproduction of nonspecific esterases is a common mechanism of resistance to organophosphate insecticides. In Myzus persicae (Green peach aphid), this protein is Esterase FE4.